The primary structure comprises 424 residues: Spermatogenesis-associated protein 2-like protein (424 aa).

Disordered stretches follow at residues 233-258 (EDEG…AELA) and 273-300 (TGGR…EEGL). A Phosphoserine modification is found at serine 327.

It belongs to the SPATA2 family.

The protein is Spermatogenesis-associated protein 2-like protein of Homo sapiens (Human).